We begin with the raw amino-acid sequence, 708 residues long: Ubiquitin thioesterase ZRANB1 (708 aa).

A RanBP2-type 1 zinc finger spans residues 3 to 33 (ERGIKWACEYCTYENWPSAIKCTMCRAQRPS). Zn(2+) contacts are provided by C10, C13, C24, and C27. The interval 38 to 73 (TEDPFKSGSSDVGRDWDPSSTEGGSSPLICPDSSAR) is disordered. RanBP2-type zinc fingers lie at residues 84-113 (NANK…QRRT) and 149-178 (RTQH…PRPN). Positions 90, 93, 104, 107, 155, 158, 169, and 172 each coordinate Zn(2+). The interval 200-225 (RARWRGSCSSGNSQRRSPPATKRDSE) is disordered. The span at 206-215 (SCSSGNSQRR) shows a compositional bias: polar residues. ANK repeat units follow at residues 260-290 (KKTD…SGGD) and 313-340 (YTLV…QQAA). A TRAF-binding region spans residues 392-641 (PTVQEKLFDE…LSAQELGNEE (250 aa)). Positions 432–592 (LYALWNRTAG…RGHFSALVAM (161 aa)) constitute an OTU domain. The active-site Nucleophile is the C443. H585 (proton acceptor) is an active-site residue.

The protein belongs to the peptidase C64 family. In terms of assembly, interacts with TRAF6. Interacts with APC. In terms of tissue distribution, widely expressed.

The protein resides in the cytoplasm. It is found in the nucleus. The enzyme catalyses Thiol-dependent hydrolysis of ester, thioester, amide, peptide and isopeptide bonds formed by the C-terminal Gly of ubiquitin (a 76-residue protein attached to proteins as an intracellular targeting signal).. Functionally, ubiquitin thioesterase, which specifically hydrolyzes 'Lys-29'-linked and 'Lys-33'-linked diubiquitin. Also cleaves 'Lys-63'-linked chains, but with 40-fold less efficiency compared to 'Lys-29'-linked ones. Positive regulator of the Wnt signaling pathway that deubiquitinates APC protein, a negative regulator of Wnt-mediated transcription. Acts as a regulator of autophagy by mediating deubiquitination of PIK3C3/VPS34, thereby promoting autophagosome maturation. Plays a role in the regulation of cell morphology and cytoskeletal organization. Required in the stress fiber dynamics and cell migration. This Homo sapiens (Human) protein is Ubiquitin thioesterase ZRANB1.